The following is a 460-amino-acid chain: tRNA (guanine(10)-N(2))-methyltransferase TRMT11 (460 aa).

Ala2 bears the N-acetylalanine mark.

Belongs to the class I-like SAM-binding methyltransferase superfamily. TRM11 methyltransferase family. As to quaternary structure, part of the heterodimeric TRMT11-TRM112 methyltransferase complex; this complex forms an active tRNA methyltransferase, where TRMT112 acts as an activator of the catalytic subunit TRMT11.

It localises to the cytoplasm. The catalysed reaction is guanosine(10) in tRNA + S-adenosyl-L-methionine = N(2)-methylguanosine(10) in tRNA + S-adenosyl-L-homocysteine + H(+). Its function is as follows. Catalytic subunit of the TRMT11-TRM112 methyltransferase complex, that specifically mediates the S-adenosyl-L-methionine-dependent N(2)-methylation of guanosine nucleotide at position 10 (m2G10) in tRNAs. This is one of the major tRNA (guanine-N(2))-methyltransferases. This chain is tRNA (guanine(10)-N(2))-methyltransferase TRMT11, found in Mus musculus (Mouse).